Here is a 323-residue protein sequence, read N- to C-terminus: Thymidylate synthase (323 aa).

Residues Arg-21 and 172 to 173 (RR) contribute to the dUMP site. Catalysis depends on Cys-192, which acts as the Nucleophile. DUMP-binding positions include 214–217 (RSND), Asn-225, and 255–257 (HVY). (6R)-5,10-methylene-5,6,7,8-tetrahydrofolate is bound at residue Asp-217. Ala-322 serves as a coordination point for (6R)-5,10-methylene-5,6,7,8-tetrahydrofolate.

It belongs to the thymidylate synthase family. Bacterial-type ThyA subfamily. Homodimer.

It is found in the cytoplasm. It carries out the reaction dUMP + (6R)-5,10-methylene-5,6,7,8-tetrahydrofolate = 7,8-dihydrofolate + dTMP. It participates in pyrimidine metabolism; dTTP biosynthesis. Its function is as follows. Catalyzes the reductive methylation of 2'-deoxyuridine-5'-monophosphate (dUMP) to 2'-deoxythymidine-5'-monophosphate (dTMP) while utilizing 5,10-methylenetetrahydrofolate (mTHF) as the methyl donor and reductant in the reaction, yielding dihydrofolate (DHF) as a by-product. This enzymatic reaction provides an intracellular de novo source of dTMP, an essential precursor for DNA biosynthesis. The chain is Thymidylate synthase from Pseudomonas syringae pv. tomato (strain ATCC BAA-871 / DC3000).